We begin with the raw amino-acid sequence, 247 residues long: ATP synthase subunit a, chloroplastic (247 aa).

A run of 5 helical transmembrane segments spans residues 38–58, 95–115, 134–154, 199–219, and 220–240; these read QVLITSWVVIAILLGSATIAV, VPFIGTMFLFIFVSNWSGALL, INTTVALALLTSVAYFYAGLT, LVVVVLVSLVPLVVPIPVMLL, and GLFTSGIQALIFATLAAAYIG.

The protein belongs to the ATPase A chain family. As to quaternary structure, F-type ATPases have 2 components, CF(1) - the catalytic core - and CF(0) - the membrane proton channel. CF(1) has five subunits: alpha(3), beta(3), gamma(1), delta(1), epsilon(1). CF(0) has four main subunits: a, b, b' and c.

The protein localises to the plastid. It is found in the chloroplast thylakoid membrane. Functionally, key component of the proton channel; it plays a direct role in the translocation of protons across the membrane. This Nicotiana sylvestris (Wood tobacco) protein is ATP synthase subunit a, chloroplastic.